Reading from the N-terminus, the 145-residue chain is Putative antiporter subunit mnhG2 (145 aa).

Transmembrane regions (helical) follow at residues 11–31 (IAAV…IGIV), 51–71 (VLLT…FFSV), and 72–92 (RLLL…HLVA).

The protein belongs to the CPA3 antiporters (TC 2.A.63) subunit G family. As to quaternary structure, may form a heterooligomeric complex that consists of seven subunits: mnhA2, mnhB2, mnhC2, mnhD2, mnhE2, mnhF2 and mnhG2.

The protein localises to the cell membrane. The polypeptide is Putative antiporter subunit mnhG2 (mnhG2) (Staphylococcus aureus (strain bovine RF122 / ET3-1)).